The primary structure comprises 501 residues: Cobyric acid synthase (501 aa).

The region spanning 251–446 is the GATase cobBQ-type domain; the sequence is NIDIAIIRLS…LHGIFDSEEF (196 aa). Catalysis depends on Cys-332, which acts as the Nucleophile. His-438 is an active-site residue.

This sequence belongs to the CobB/CobQ family. CobQ subfamily.

Its pathway is cofactor biosynthesis; adenosylcobalamin biosynthesis. In terms of biological role, catalyzes amidations at positions B, D, E, and G on adenosylcobyrinic A,C-diamide. NH(2) groups are provided by glutamine, and one molecule of ATP is hydrogenolyzed for each amidation. The protein is Cobyric acid synthase of Clostridium botulinum (strain Alaska E43 / Type E3).